Consider the following 383-residue polypeptide: Photosynthetic reaction center cytochrome c subunit (383 aa).

The first 22 residues, methionine 1–glycine 22, serve as a signal peptide directing secretion. Cysteine 23 is lipidated: N-palmitoyl cysteine. Residue cysteine 23 is the site of S-diacylglycerol cysteine attachment. Residues methionine 94, cysteine 107, cysteine 110, histidine 111, methionine 130, histidine 144, cysteine 152, cysteine 155, histidine 156, methionine 236, cysteine 247, cysteine 250, histidine 251, cysteine 307, cysteine 310, and histidine 311 each coordinate heme. The disordered stretch occupies residues proline 335–leucine 383.

Component of the photosynthetic reaction center composed of protein subunits L (PufL), M (PufM), H (PuhA) and cytochrome C (PufC). The reaction center interacts with light-harvesting antenna complex LH1. Post-translationally, binds 4 heme groups per subunit.

Its subcellular location is the cellular chromatophore membrane. The reaction center of purple bacteria contains a tightly bound cytochrome molecule which re-reduces the photo oxidized primary electron donor. The polypeptide is Photosynthetic reaction center cytochrome c subunit (pufC) (Allochromatium vinosum (strain ATCC 17899 / DSM 180 / NBRC 103801 / NCIMB 10441 / D) (Chromatium vinosum)).